Reading from the N-terminus, the 175-residue chain is FOXL2 neighbor protein (175 aa).

Disordered regions lie at residues 1 to 39 (MTRT…PALV) and 70 to 100 (AQKT…GKRR).

The protein is FOXL2 neighbor protein (FOXL2NB) of Homo sapiens (Human).